A 690-amino-acid polypeptide reads, in one-letter code: DNA ligase (690 aa).

NAD(+) is bound by residues 36–40 (DAVYD), 85–86 (SL), and Glu-124. The N6-AMP-lysine intermediate role is filled by Lys-126. 4 residues coordinate NAD(+): Arg-147, Glu-184, Lys-308, and Lys-332. 4 residues coordinate Zn(2+): Cys-426, Cys-429, Cys-444, and Cys-449. One can recognise a BRCT domain in the interval 614 to 690 (NQSNVFDGKS…INENELKLLL (77 aa)).

This sequence belongs to the NAD-dependent DNA ligase family. LigA subfamily. It depends on Mg(2+) as a cofactor. Mn(2+) serves as cofactor.

It carries out the reaction NAD(+) + (deoxyribonucleotide)n-3'-hydroxyl + 5'-phospho-(deoxyribonucleotide)m = (deoxyribonucleotide)n+m + AMP + beta-nicotinamide D-nucleotide.. Its function is as follows. DNA ligase that catalyzes the formation of phosphodiester linkages between 5'-phosphoryl and 3'-hydroxyl groups in double-stranded DNA using NAD as a coenzyme and as the energy source for the reaction. It is essential for DNA replication and repair of damaged DNA. In Prochlorococcus marinus (strain NATL1A), this protein is DNA ligase.